The sequence spans 232 residues: Ribonuclease 3 (232 aa).

In terms of domain architecture, RNase III spans Q6–G135. Mg(2+) is bound at residue E48. Residue D52 is part of the active site. Residues D121 and E124 each coordinate Mg(2+). The active site involves E124. Residues D161–M230 form the DRBM domain.

Belongs to the ribonuclease III family. Homodimer. It depends on Mg(2+) as a cofactor.

It localises to the cytoplasm. The catalysed reaction is Endonucleolytic cleavage to 5'-phosphomonoester.. Its function is as follows. Digests double-stranded RNA. Involved in the processing of primary rRNA transcript to yield the immediate precursors to the large and small rRNAs (23S and 16S). Processes some mRNAs, and tRNAs when they are encoded in the rRNA operon. Processes pre-crRNA and tracrRNA of type II CRISPR loci if present in the organism. In Limosilactobacillus fermentum (strain NBRC 3956 / LMG 18251) (Lactobacillus fermentum), this protein is Ribonuclease 3.